Here is a 356-residue protein sequence, read N- to C-terminus: Glutamine synthetase cytosolic isozyme 2 (356 aa).

Residues 19 to 99 (IIAEYIWIGG…VMCDTYTPAG (81 aa)) form the GS beta-grasp domain. Residues 106–356 (KRHNAAKIFS…IAESTILWKP (251 aa)) form the GS catalytic domain.

This sequence belongs to the glutamine synthetase family. As to quaternary structure, homooctamer.

It is found in the cytoplasm. The catalysed reaction is L-glutamate + NH4(+) + ATP = L-glutamine + ADP + phosphate + H(+). The sequence is that of Glutamine synthetase cytosolic isozyme 2 (GS1-2) from Vitis vinifera (Grape).